A 786-amino-acid chain; its full sequence is Probable glutamine--tRNA ligase (786 aa).

Over residues 181-198 the composition is skewed to basic and acidic residues; the sequence is DLAPKKKEKKPEGPKPSK. Residues 181–218 form a disordered region; that stretch reads DLAPKKKEKKPEGPKPSKDAAAAATAPGTKNQKEASPE. Residues 276 to 286 carry the 'HIGH' region motif; it reads PEPNGVLHIGH. ATP contacts are provided by residues 277 to 279 and 283 to 289; these read EPN and HIGHAKA. 2 residues coordinate L-glutamine: D309 and Y444. ATP contacts are provided by residues T463, 492-493, and 500-502; these read RL and VSK. The 'KMSKS' region motif lies at 499-503; sequence VVSKR.

It belongs to the class-I aminoacyl-tRNA synthetase family.

The catalysed reaction is tRNA(Gln) + L-glutamine + ATP = L-glutaminyl-tRNA(Gln) + AMP + diphosphate. This is Probable glutamine--tRNA ligase from Caenorhabditis elegans.